Here is a 373-residue protein sequence, read N- to C-terminus: Forkhead box protein E1 (373 aa).

The tract at residues 19–51 (KEERGETAAGAGVPGEATGRGAGGRRRKRPLQR) is disordered. Positions 41 to 50 (GGRRRKRPLQ) are enriched in basic residues. Residues 53 to 147 (KPPYSYIALI…ESGSFLRRRK (95 aa)) constitute a DNA-binding region (fork-head).

In terms of processing, phosphorylated. In terms of tissue distribution, detected in adult brain, placenta, lung, liver, skeletal muscle, kidney, pancreas, heart, colon, small intestine testis and thymus. Expression was strongest in heart and pancreas.

The protein resides in the nucleus. Transcription factor that binds consensus sites on a variety of gene promoters and activate their transcription. Involved in proper palate formation, most probably through the expression of MSX1 and TGFB3 genes which are direct targets of this transcription factor. Also implicated in thyroid gland morphogenesis. May indirectly play a role in cell growth and migration through the regulation of WNT5A expression. The polypeptide is Forkhead box protein E1 (FOXE1) (Homo sapiens (Human)).